Consider the following 73-residue polypeptide: Conotoxin CnIIIE (73 aa).

The N-terminal stretch at Met1–Ala19 is a signal peptide. The propeptide occupies Leu20–Gln49. 3 cysteine pairs are disulfide-bonded: Cys53-Cys72, Cys54-Cys70, and Cys60-Cys73.

The protein belongs to the conotoxin M superfamily. As to expression, expressed by the venom duct.

Its subcellular location is the secreted. In terms of biological role, shows a paralytic effect in fish. The sequence is that of Conotoxin CnIIIE from Conus consors (Singed cone).